Reading from the N-terminus, the 129-residue chain is UPF0344 protein MW0851 (129 aa).

The next 4 helical transmembrane spans lie at 1 to 21 (MLHL…ATYL), 36 to 56 (LHMI…WILI), 67 to 87 (MLLT…EVSI), and 99 to 119 (MFWI…ILPL).

This sequence belongs to the UPF0344 family.

It localises to the cell membrane. The sequence is that of UPF0344 protein MW0851 from Staphylococcus aureus (strain MW2).